A 118-amino-acid polypeptide reads, in one-letter code: Large ribosomal subunit protein uL18 (118 aa).

It belongs to the universal ribosomal protein uL18 family. Part of the 50S ribosomal subunit; part of the 5S rRNA/L5/L18/L25 subcomplex. Contacts the 5S and 23S rRNAs.

Its function is as follows. This is one of the proteins that bind and probably mediate the attachment of the 5S RNA into the large ribosomal subunit, where it forms part of the central protuberance. The sequence is that of Large ribosomal subunit protein uL18 from Caulobacter sp. (strain K31).